A 231-amino-acid chain; its full sequence is Albumin-2 (231 aa).

4 Hemopexin repeats span residues 4 to 55 (TGYI…FKSL), 62 to 112 (SYGV…FPFF), 118 to 166 (ENGI…FPCF), and 172 to 223 (ESGT…WPSL). The Ca(2+) site is built by N8, D66, D122, and D176.

Monomer and homodimer.

It is found in the cytoplasm. The protein resides in the cytosol. Its function is as follows. May play a role in response to oxidative stress and polyamine biosynthesis. This is Albumin-2 from Pisum sativum (Garden pea).